The chain runs to 57 residues: Small ribosomal subunit protein eS27 (57 aa).

The Zn(2+) site is built by Cys-10, Cys-13, Cys-29, and Cys-32. The segment at 10–32 adopts a C4-type zinc-finger fold; the sequence is CPDCENEQSLFEKAASEVSCAVC.

It belongs to the eukaryotic ribosomal protein eS27 family. As to quaternary structure, part of the 30S ribosomal subunit. Zn(2+) is required as a cofactor.

This chain is Small ribosomal subunit protein eS27, found in Haloarcula marismortui (strain ATCC 43049 / DSM 3752 / JCM 8966 / VKM B-1809) (Halobacterium marismortui).